The following is a 490-amino-acid chain: Bifunctional protein HldE (490 aa).

The ribokinase stretch occupies residues 1–330 (MFDFDDLSQA…RKILPHAYRA (330 aa)). Position 205–208 (205–208 (NRKE)) interacts with ATP. Asp-275 is a catalytic residue. The interval 358-490 (FTNGCFDILH…LVDRARSDQR (133 aa)) is cytidylyltransferase.

This sequence in the N-terminal section; belongs to the carbohydrate kinase PfkB family. It in the C-terminal section; belongs to the cytidylyltransferase family. In terms of assembly, homodimer.

The catalysed reaction is D-glycero-beta-D-manno-heptose 7-phosphate + ATP = D-glycero-beta-D-manno-heptose 1,7-bisphosphate + ADP + H(+). The enzyme catalyses D-glycero-beta-D-manno-heptose 1-phosphate + ATP + H(+) = ADP-D-glycero-beta-D-manno-heptose + diphosphate. It participates in nucleotide-sugar biosynthesis; ADP-L-glycero-beta-D-manno-heptose biosynthesis; ADP-L-glycero-beta-D-manno-heptose from D-glycero-beta-D-manno-heptose 7-phosphate: step 1/4. It functions in the pathway nucleotide-sugar biosynthesis; ADP-L-glycero-beta-D-manno-heptose biosynthesis; ADP-L-glycero-beta-D-manno-heptose from D-glycero-beta-D-manno-heptose 7-phosphate: step 3/4. Catalyzes the phosphorylation of D-glycero-D-manno-heptose 7-phosphate at the C-1 position to selectively form D-glycero-beta-D-manno-heptose-1,7-bisphosphate. Functionally, catalyzes the ADP transfer from ATP to D-glycero-beta-D-manno-heptose 1-phosphate, yielding ADP-D-glycero-beta-D-manno-heptose. In Bradyrhizobium sp. (strain ORS 278), this protein is Bifunctional protein HldE.